A 244-amino-acid polypeptide reads, in one-letter code: Adenosine 5'-phosphosulfate reductase (244 aa).

Residues C129, C130, C212, and C215 each coordinate [4Fe-4S] cluster. The active-site Nucleophile; cysteine thiosulfonate intermediate is the C240.

Belongs to the PAPS reductase family. CysH subfamily. [4Fe-4S] cluster is required as a cofactor.

The protein localises to the cytoplasm. It carries out the reaction [thioredoxin]-disulfide + sulfite + AMP + 2 H(+) = adenosine 5'-phosphosulfate + [thioredoxin]-dithiol. The protein operates within sulfur metabolism; hydrogen sulfide biosynthesis; sulfite from sulfate. In terms of biological role, catalyzes the formation of sulfite from adenosine 5'-phosphosulfate (APS) using thioredoxin as an electron donor. In Neisseria meningitidis serogroup A / serotype 4A (strain DSM 15465 / Z2491), this protein is Adenosine 5'-phosphosulfate reductase.